Here is a 504-residue protein sequence, read N- to C-terminus: Peptidyl-prolyl cis-trans isomerase-like 4 (504 aa).

Residues 1-169 (MSVMLETSLG…QNIRIRHVEI (169 aa)) enclose the PPIase cyclophilin-type domain. The region spanning 246-324 (NILFVCKLNP…RRIWVDFSQS (79 aa)) is the RRM domain. A compositionally biased stretch (polar residues) spans 330-339 (RSMLSSSNPT). The disordered stretch occupies residues 330 to 504 (RSMLSSSNPT…RERDDRDRRR (175 aa)). Over residues 340-354 (GRGGRGGRGGRGGNY) the composition is skewed to gly residues. Basic and acidic residues-rich tracts occupy residues 356 to 381 (GRRDGDRDRDRDSGWSSRRDAPDSRR) and 416 to 504 (SKRD…DRRR).

It belongs to the cyclophilin-type PPIase family. PPIL4 subfamily.

It localises to the nucleus. It catalyses the reaction [protein]-peptidylproline (omega=180) = [protein]-peptidylproline (omega=0). Its function is as follows. PPIases accelerate the folding of proteins. It catalyzes the cis-trans isomerization of proline imidic peptide bonds in oligopeptides. This is Peptidyl-prolyl cis-trans isomerase-like 4 (CYP6) from Cryptococcus neoformans var. neoformans serotype D (strain B-3501A) (Filobasidiella neoformans).